The sequence spans 109 residues: Nucleoid-associated protein BUsg_467 (109 aa).

Belongs to the YbaB/EbfC family. In terms of assembly, homodimer.

The protein localises to the cytoplasm. It localises to the nucleoid. Binds to DNA and alters its conformation. May be involved in regulation of gene expression, nucleoid organization and DNA protection. In Buchnera aphidicola subsp. Schizaphis graminum (strain Sg), this protein is Nucleoid-associated protein BUsg_467.